Consider the following 197-residue polypeptide: Pre-mRNA-splicing factor SNT309 (197 aa).

In terms of assembly, associated with the spliceosome.

The protein resides in the nucleus. Its function is as follows. Involved in pre-mRNA splicing. This chain is Pre-mRNA-splicing factor SNT309 (SNT309), found in Eremothecium gossypii (strain ATCC 10895 / CBS 109.51 / FGSC 9923 / NRRL Y-1056) (Yeast).